The chain runs to 636 residues: Chaperone protein DnaK (636 aa).

Position 203 is a phosphothreonine; by autocatalysis (Thr-203). A disordered region spans residues 602–636 (VYGKQQEGAPAQEEPSAEGKKADDEGTVEGEFREV). Positions 618–636 (AEGKKADDEGTVEGEFREV) are enriched in basic and acidic residues.

The protein belongs to the heat shock protein 70 family.

Its function is as follows. Acts as a chaperone. The chain is Chaperone protein DnaK from Dehalococcoides mccartyi (strain ATCC BAA-2100 / JCM 16839 / KCTC 5957 / BAV1).